Here is a 188-residue protein sequence, read N- to C-terminus: Adenine phosphoribosyltransferase (188 aa).

This sequence belongs to the purine/pyrimidine phosphoribosyltransferase family. Homodimer.

The protein localises to the cytoplasm. The enzyme catalyses AMP + diphosphate = 5-phospho-alpha-D-ribose 1-diphosphate + adenine. It participates in purine metabolism; AMP biosynthesis via salvage pathway; AMP from adenine: step 1/1. Catalyzes a salvage reaction resulting in the formation of AMP, that is energically less costly than de novo synthesis. This is Adenine phosphoribosyltransferase from Frankia casuarinae (strain DSM 45818 / CECT 9043 / HFP020203 / CcI3).